Consider the following 644-residue polypeptide: DNA mismatch repair protein MutL (644 aa).

Belongs to the DNA mismatch repair MutL/HexB family.

Its function is as follows. This protein is involved in the repair of mismatches in DNA. It is required for dam-dependent methyl-directed DNA mismatch repair. May act as a 'molecular matchmaker', a protein that promotes the formation of a stable complex between two or more DNA-binding proteins in an ATP-dependent manner without itself being part of a final effector complex. This chain is DNA mismatch repair protein MutL, found in Chlorobium chlorochromatii (strain CaD3).